A 346-amino-acid polypeptide reads, in one-letter code: Protein RecA (346 aa).

Position 66-73 (Gly-66–Thr-73) interacts with ATP.

This sequence belongs to the RecA family.

It localises to the cytoplasm. Its function is as follows. Can catalyze the hydrolysis of ATP in the presence of single-stranded DNA, the ATP-dependent uptake of single-stranded DNA by duplex DNA, and the ATP-dependent hybridization of homologous single-stranded DNAs. It interacts with LexA causing its activation and leading to its autocatalytic cleavage. The protein is Protein RecA of Aromatoleum aromaticum (strain DSM 19018 / LMG 30748 / EbN1) (Azoarcus sp. (strain EbN1)).